A 399-amino-acid chain; its full sequence is Glutamyl-tRNA reductase (399 aa).

Substrate is bound by residues 45–48 (TCNR), Ser101, 106–108 (EDQ), and Gln112. Cys46 functions as the Nucleophile in the catalytic mechanism. NADP(+) is bound at residue 177 to 182 (GFGKIG).

It belongs to the glutamyl-tRNA reductase family. As to quaternary structure, homodimer.

It carries out the reaction (S)-4-amino-5-oxopentanoate + tRNA(Glu) + NADP(+) = L-glutamyl-tRNA(Glu) + NADPH + H(+). It participates in porphyrin-containing compound metabolism; protoporphyrin-IX biosynthesis; 5-aminolevulinate from L-glutamyl-tRNA(Glu): step 1/2. Functionally, catalyzes the NADPH-dependent reduction of glutamyl-tRNA(Glu) to glutamate 1-semialdehyde (GSA). This Clostridium kluyveri (strain ATCC 8527 / DSM 555 / NBRC 12016 / NCIMB 10680 / K1) protein is Glutamyl-tRNA reductase.